Here is a 197-residue protein sequence, read N- to C-terminus: TLE family member 5 (197 aa).

Residues 166–197 are CCN domain; the sequence is LSALGSQTHLSKEDKNGHDGDTHQEDDGEKSD. The tract at residues 170 to 197 is disordered; that stretch reads GSQTHLSKEDKNGHDGDTHQEDDGEKSD. Over residues 175–197 the composition is skewed to basic and acidic residues; that stretch reads LSKEDKNGHDGDTHQEDDGEKSD. A Phosphoserine modification is found at serine 196.

The protein belongs to the WD repeat Groucho/TLE family. As to quaternary structure, homooligomer and heterooligomer with other family members. Binds TCF7 and the NF-kappa-B subunit RELA. Interacts with PHF12. Interacts (via Q domain) with SIX3. Interacts with SIX6. Ubiquitinated by XIAP/BIRC4. In terms of tissue distribution, ubiquitously expressed in developing embryos by midgestation, a wide expression is conserved in adult. In mouse, abundantly expressed in muscle, heart and brain.

It localises to the nucleus. In terms of biological role, transcriptional corepressor. Acts as a dominant repressor towards other family members. Inhibits NF-kappa-B-regulated gene expression. May be required for the initiation and maintenance of the differentiated state. Essential for the transcriptional repressor activity of SIX3 during retina and lens development. This is TLE family member 5 from Mus musculus (Mouse).